The primary structure comprises 213 residues: Outer-membrane lipoprotein carrier protein (213 aa).

Positions 1-23 (MKKLLKQSLLGFALVSMTGAAFA) are cleaved as a signal peptide.

This sequence belongs to the LolA family. In terms of assembly, monomer.

Its subcellular location is the periplasm. Its function is as follows. Participates in the translocation of lipoproteins from the inner membrane to the outer membrane. Only forms a complex with a lipoprotein if the residue after the N-terminal Cys is not an aspartate (The Asp acts as a targeting signal to indicate that the lipoprotein should stay in the inner membrane). The chain is Outer-membrane lipoprotein carrier protein from Actinobacillus pleuropneumoniae serotype 7 (strain AP76).